The chain runs to 185 residues: Ribosome-recycling factor (185 aa).

A disordered region spans residues 138-157; that stretch reads ELKKLEKDHTASEDEVKRAQ.

It belongs to the RRF family.

It localises to the cytoplasm. In terms of biological role, responsible for the release of ribosomes from messenger RNA at the termination of protein biosynthesis. May increase the efficiency of translation by recycling ribosomes from one round of translation to another. This is Ribosome-recycling factor from Desulfitobacterium hafniense (strain DSM 10664 / DCB-2).